The primary structure comprises 457 residues: UPF0210 protein Sfum_2948 (457 aa).

It belongs to the UPF0210 family. As to quaternary structure, homodimer.

This is UPF0210 protein Sfum_2948 from Syntrophobacter fumaroxidans (strain DSM 10017 / MPOB).